The following is a 376-amino-acid chain: Pregnancy-associated glycoprotein 2 (376 aa).

The signal sequence occupies residues 1 to 15 (MKWLVLLGLVALSEC). N-linked (GlcNAc...) asparagine glycosylation is found at Asn51 and Asn71. In terms of domain architecture, Peptidase A1 spans 68–373 (YVGNITIGTP…DRKNRRIGLA (306 aa)). The active site involves Asp86. The cysteines at positions 99 and 104 are disulfide-linked. N-linked (GlcNAc...) asparagine glycans are attached at residues Asn114, Asn248, and Asn252. Cysteines 258 and 262 form a disulfide. The active site involves Asp267. A disulfide bridge links Cys300 with Cys333. A glycan (N-linked (GlcNAc...) asparagine) is linked at Asn343.

Belongs to the peptidase A1 family. N-Glycosylated; the glycans terminate in either N-acetyl-galactosamine (GalNAc) or N-acetyllactosamine. Terminal GalNAc on Asn-linked glycans is greatly reduced prior to parturition while lactosamine-type N-glycans remain unaltered. In terms of tissue distribution, trophoblast and placental tissue. Localized to both the mononucleate and binucleate cells of the trophectoderm.

Its subcellular location is the secreted. It localises to the extracellular space. Its function is as follows. PAG2 or a processed derivative of this molecule might represent a factor that binds the LH receptor. The sequence is that of Pregnancy-associated glycoprotein 2 (PAG2) from Bos taurus (Bovine).